The primary structure comprises 200 residues: Ribonuclease HII (200 aa).

Residues 9-198 form the RNase H type-2 domain; it reads ALIAGVDEVG…VQRVLAQAKG (190 aa). 3 residues coordinate a divalent metal cation: D15, E16, and D107.

This sequence belongs to the RNase HII family. The cofactor is Mn(2+). Mg(2+) is required as a cofactor.

It is found in the cytoplasm. It carries out the reaction Endonucleolytic cleavage to 5'-phosphomonoester.. Endonuclease that specifically degrades the RNA of RNA-DNA hybrids. This is Ribonuclease HII from Pseudoalteromonas translucida (strain TAC 125).